Consider the following 132-residue polypeptide: Small ribosomal subunit protein uS8 (132 aa).

It belongs to the universal ribosomal protein uS8 family. In terms of assembly, part of the 30S ribosomal subunit. Contacts proteins S5 and S12.

In terms of biological role, one of the primary rRNA binding proteins, it binds directly to 16S rRNA central domain where it helps coordinate assembly of the platform of the 30S subunit. The protein is Small ribosomal subunit protein uS8 of Staphylococcus aureus (strain USA300).